The chain runs to 246 residues: Probable transcriptional regulatory protein YebC (246 aa).

Positions 1-20 (MAGHSKWANTRHRKAAQDAK) are disordered.

This sequence belongs to the TACO1 family.

Its subcellular location is the cytoplasm. In Shigella dysenteriae serotype 1 (strain Sd197), this protein is Probable transcriptional regulatory protein YebC.